Reading from the N-terminus, the 275-residue chain is Large ribosomal subunit protein uL2 (275 aa).

The span at 28–38 (RPYDGLLEKKS) shows a compositional bias: basic and acidic residues. 2 disordered regions span residues 28-58 (RPYD…GGGH) and 223-275 (VAMN…RKAK). The segment covering 254-275 (KGHKTRKNKRTDKLIVRRRKAK) has biased composition (basic residues).

Belongs to the universal ribosomal protein uL2 family. In terms of assembly, part of the 50S ribosomal subunit. Forms a bridge to the 30S subunit in the 70S ribosome.

Functionally, one of the primary rRNA binding proteins. Required for association of the 30S and 50S subunits to form the 70S ribosome, for tRNA binding and peptide bond formation. It has been suggested to have peptidyltransferase activity; this is somewhat controversial. Makes several contacts with the 16S rRNA in the 70S ribosome. The chain is Large ribosomal subunit protein uL2 from Chromohalobacter salexigens (strain ATCC BAA-138 / DSM 3043 / CIP 106854 / NCIMB 13768 / 1H11).